Consider the following 398-residue polypeptide: UPF0229 protein Ccel_0490 (398 aa).

Disordered stretches follow at residues 1–22 (MAIFRDCSNIGKDRSAEDRRRH) and 68–104 (KSKPGVGAGDGNEKRGDKFPGDSQEGKGKGNAGNSEG). Composition is skewed to basic and acidic residues over residues 11–22 (GKDRSAEDRRRH) and 78–95 (GNEKRGDKFPGDSQEGKG).

It belongs to the UPF0229 family.

The polypeptide is UPF0229 protein Ccel_0490 (Ruminiclostridium cellulolyticum (strain ATCC 35319 / DSM 5812 / JCM 6584 / H10) (Clostridium cellulolyticum)).